The primary structure comprises 319 residues: MQITFLGTSSGVPTRSRNVSSVALRLPQRAELWLFDCGEGTQHQIMRSELKISQLSRIFITHMHGDHIFGLMGLLATCGLAGNVERIDIYGPPGLNDYIQSASRYSYTHFSYPIKVHAIRPGVIYEDDYFTVSCGNLHHRITAFGYRVAEKDRTGRFDVEKAKALDIPSGRIYGQLKRGETVILDDGRVIDGTQLCGPTEIGRKIAYCTDTIYCDGAVELAHDADVLIHEATFAHQDADMAFQRLHSTTTMAAQTALAAGAHRLIMSHFSPRYAPGNTLELKDLLKEARAIFPRTDMAYDFMIHEVPRRREVELTKVGV.

Zn(2+)-binding residues include His62, His64, Asp66, His67, His139, Asp210, and His268. Catalysis depends on Asp66, which acts as the Proton acceptor.

Belongs to the RNase Z family. Homodimer. It depends on Zn(2+) as a cofactor.

The catalysed reaction is Endonucleolytic cleavage of RNA, removing extra 3' nucleotides from tRNA precursor, generating 3' termini of tRNAs. A 3'-hydroxy group is left at the tRNA terminus and a 5'-phosphoryl group is left at the trailer molecule.. Functionally, zinc phosphodiesterase, which displays some tRNA 3'-processing endonuclease activity. Probably involved in tRNA maturation, by removing a 3'-trailer from precursor tRNA. The polypeptide is Ribonuclease Z (Nostoc punctiforme (strain ATCC 29133 / PCC 73102)).